The sequence spans 228 residues: Deoxyribose-phosphate aldolase (228 aa).

The Proton donor/acceptor role is filled by Asp96. Catalysis depends on Lys157, which acts as the Schiff-base intermediate with acetaldehyde. The active-site Proton donor/acceptor is the Lys185.

It belongs to the DeoC/FbaB aldolase family. DeoC type 1 subfamily.

The protein resides in the cytoplasm. The catalysed reaction is 2-deoxy-D-ribose 5-phosphate = D-glyceraldehyde 3-phosphate + acetaldehyde. It functions in the pathway carbohydrate degradation; 2-deoxy-D-ribose 1-phosphate degradation; D-glyceraldehyde 3-phosphate and acetaldehyde from 2-deoxy-alpha-D-ribose 1-phosphate: step 2/2. In terms of biological role, catalyzes a reversible aldol reaction between acetaldehyde and D-glyceraldehyde 3-phosphate to generate 2-deoxy-D-ribose 5-phosphate. The polypeptide is Deoxyribose-phosphate aldolase (Picosynechococcus sp. (strain ATCC 27264 / PCC 7002 / PR-6) (Agmenellum quadruplicatum)).